Here is a 341-residue protein sequence, read N- to C-terminus: Heat-shock protein cognate (HSC) co-chaperone sgt12 (341 aa).

Positions 86-123 (PSKEPASAGAQAQSTEAQQPKAGAPTPESDKLKSEGNA) are disordered. TPR repeat units lie at residues 114 to 147 (SDKLKSEGNAAMARKEYSKAIDLYTQALSIAPAN), 148 to 181 (PIYLSNRAAAYSASGQHEKAAEDAELATVVDPKY), and 182 to 215 (SKAWSRLGLARFDMADYKGAKEAYEKGIEAEGNG). The disordered stretch occupies residues 232–280 (EEANRGAEPPADDVDDAAGASRGAGGMPDLSSLASMLGGRGGGGGGMPD). Residues 269-278 (GGRGGGGGGM) show a composition bias toward gly residues.

This sequence belongs to the SGT family. Forms homodimers. Component of the get4/get5/sgt2 sorting complex. Dimers of sgt2 bind directly a single get5. Binds HSC family members ssa1, sse1, hsp104 and hsc82 via its TPR domain.

The protein localises to the cytoplasm. Functionally, heat-shock protein cognate (HSC) co-chaperone that preferentially binds endoplasmic reticulum-destined tail-anchored (TA) proteins and directs them to the GET (guided entry of TA proteins) pathway via get4 and get5. Get4 and get5 form an obligate complex that catalyzes the transfer of tail-anchored proteins destined to the endoplasmic reticulum from sgt2 to the cytosolic targeting factor which then targets the TA protein to the ER membrane via get1/get2. In Aspergillus fumigatus (strain ATCC MYA-4609 / CBS 101355 / FGSC A1100 / Af293) (Neosartorya fumigata), this protein is Heat-shock protein cognate (HSC) co-chaperone sgt12.